A 601-amino-acid chain; its full sequence is Putative Lon protease homolog (601 aa).

The region spanning Gly363–Arg560 is the Lon proteolytic domain. Catalysis depends on residues Ser455 and Lys498.

Belongs to the peptidase S16 family.

The protein is Putative Lon protease homolog of Haemophilus influenzae (strain ATCC 51907 / DSM 11121 / KW20 / Rd).